Reading from the N-terminus, the 362-residue chain is MAGNSFGQLFRVTTFGESHGLALGAVVDGCPPGLEISEADLQIDLDRRKPGTSRYTTPRREPDEVKILSGVFEGRTTGTSIGLLIENTDQRSKDYSDIKDVFRPGHADYTYHQKYGQRDYRGGGRSSARETAMRVAAGAIAKKYLKQMHGIEITGFLSQLGPIKAEGFDAAQIEQNPFFFPDAGKLEELDQYMRDLKKEGNSVGAKVQVIATKVPVGLGEPVFDRLDADIAHAMMGINAVKGVEIGDGFAVVEQKGSEHRDEMTPAGFASNHAGGILGGISSGQDIVVSMALKPTSSITVPGKTINTEGEAIEMITKGRHDPCVGIRAVPIAEAMLALVLMDHLLRHRAQNQGVMTQTPQLR.

Positions 48 and 54 each coordinate NADP(+). Residues 125–127, 238–239, Gly278, 293–297, and Arg319 each bind FMN; these read RSS, NA, and KPTSS.

Belongs to the chorismate synthase family. In terms of assembly, homotetramer. The cofactor is FMNH2.

The enzyme catalyses 5-O-(1-carboxyvinyl)-3-phosphoshikimate = chorismate + phosphate. It participates in metabolic intermediate biosynthesis; chorismate biosynthesis; chorismate from D-erythrose 4-phosphate and phosphoenolpyruvate: step 7/7. Catalyzes the anti-1,4-elimination of the C-3 phosphate and the C-6 proR hydrogen from 5-enolpyruvylshikimate-3-phosphate (EPSP) to yield chorismate, which is the branch point compound that serves as the starting substrate for the three terminal pathways of aromatic amino acid biosynthesis. This reaction introduces a second double bond into the aromatic ring system. This is Chorismate synthase from Aeromonas salmonicida (strain A449).